The following is a 692-amino-acid chain: Elongation factor G 1 (692 aa).

The tr-type G domain maps to 8 to 283 (EKTRNIGIMA…SVVEYLPSPV (276 aa)). Residues 17 to 24 (AHIDAGKT), 81 to 85 (DTPGH), and 135 to 138 (NKMD) each bind GTP.

The protein belongs to the TRAFAC class translation factor GTPase superfamily. Classic translation factor GTPase family. EF-G/EF-2 subfamily.

The protein resides in the cytoplasm. Catalyzes the GTP-dependent ribosomal translocation step during translation elongation. During this step, the ribosome changes from the pre-translocational (PRE) to the post-translocational (POST) state as the newly formed A-site-bound peptidyl-tRNA and P-site-bound deacylated tRNA move to the P and E sites, respectively. Catalyzes the coordinated movement of the two tRNA molecules, the mRNA and conformational changes in the ribosome. The chain is Elongation factor G 1 from Geobacter metallireducens (strain ATCC 53774 / DSM 7210 / GS-15).